Here is a 946-residue protein sequence, read N- to C-terminus: Alanine--tRNA ligase, cytoplasmic (946 aa).

The Zn(2+) site is built by His591, His595, Cys710, and His714.

It belongs to the class-II aminoacyl-tRNA synthetase family. In terms of assembly, monomer. The cofactor is Zn(2+).

Its subcellular location is the cytoplasm. The catalysed reaction is tRNA(Ala) + L-alanine + ATP = L-alanyl-tRNA(Ala) + AMP + diphosphate. Catalyzes the attachment of alanine to tRNA(Ala) in a two-step reaction: alanine is first activated by ATP to form Ala-AMP and then transferred to the acceptor end of tRNA(Ala). Also edits incorrectly charged tRNA(Ala) via its editing domain. The polypeptide is Alanine--tRNA ligase, cytoplasmic (alaS) (Dictyostelium discoideum (Social amoeba)).